Reading from the N-terminus, the 483-residue chain is Glycogen synthase (483 aa).

Lysine 15 contacts ADP-alpha-D-glucose.

It belongs to the glycosyltransferase 1 family. Bacterial/plant glycogen synthase subfamily.

The enzyme catalyses [(1-&gt;4)-alpha-D-glucosyl](n) + ADP-alpha-D-glucose = [(1-&gt;4)-alpha-D-glucosyl](n+1) + ADP + H(+). The protein operates within glycan biosynthesis; glycogen biosynthesis. Functionally, synthesizes alpha-1,4-glucan chains using ADP-glucose. In Exiguobacterium sibiricum (strain DSM 17290 / CCUG 55495 / CIP 109462 / JCM 13490 / 255-15), this protein is Glycogen synthase.